A 166-amino-acid chain; its full sequence is Deoxyuridine 5'-triphosphate nucleotidohydrolase (166 aa).

The tract at residues 1 to 24 (MACVNEPSPKLQKLDRNGIHGDSS) is disordered. Residue E138 participates in Mg(2+) binding.

It belongs to the dUTPase family. As to quaternary structure, homotrimer. Mg(2+) is required as a cofactor.

The catalysed reaction is dUTP + H2O = dUMP + diphosphate + H(+). It participates in pyrimidine metabolism; dUMP biosynthesis; dUMP from dCTP (dUTP route): step 2/2. This enzyme is involved in nucleotide metabolism: it produces dUMP, the immediate precursor of thymidine nucleotides and it decreases the intracellular concentration of dUTP, preventing uracil incorporation into DNA. The protein is Deoxyuridine 5'-triphosphate nucleotidohydrolase (DUT) of Arabidopsis thaliana (Mouse-ear cress).